The following is a 93-amino-acid chain: DNA-binding protein HU 1 (93 aa).

It belongs to the bacterial histone-like protein family. In terms of assembly, homodimer.

It localises to the cytoplasm. The protein localises to the nucleoid. In terms of biological role, histone-like DNA-binding protein which is capable of wrapping DNA to stabilize it, and thus to prevent its denaturation under extreme environmental conditions. This is DNA-binding protein HU 1 (hup1) from Streptomyces coelicolor (strain ATCC BAA-471 / A3(2) / M145).